The following is a 1213-amino-acid chain: MVDVNRFKSMQITLASPSKVRSWSYGEVKKPETINYRTLKPEREGLFDEVIFGPTKDWECACGKYKRIRYKGIVCDRCGVEVTRAKVRRERMGHIELKAPVSHIWYFKGIPSRMGLTLDMSPRALEEVIYFAAYVVIDPKDTPLEPKSLLTEREYREKLQEYGHGSFVAKMGAEAIQALLKRVDLAAEIAELKEELKSASGQKRIKAVRRLDVLDAFNKSGNKPEWMVLNILPVIPPDLRPMVQLDGGRFAASDLNDLYRRVINRNNRLARLLELNAPGIIVQNEKRMLQEAVDALIDNGRRGRPITGPGSRPLKSLSHMLKGKQGRFRQNLLGKRVDFSGRSVIAVGPTLKMYQCGVPREMAIELFKPFVMREIVAKEYAGNVKAAKRMVERGDERIWDILEEVIKEHPVLLNRAPTLHRLGIQAFEPVLIDGKALRLHPLVCEAYNADFDGDQMAIHVPLSEEAQAEARLLMLAAEHILNPKDGKPVVTPSQDMVLGNYYLTMEDAGREGEGMIFKDKDEAVMAYRNGYAHLHSRVGIAVDSMPNKPWKDNQRHKIMVTTVGKILFNDIMPEDLPYLQEPNNANLTEGTPDKYFLEPGQDIQEVIDGLEINVPFKKKNLGNIIAETFKRFRTTETSAFLDRLKDLGYYHSTLAGLTVGIADIPVIDNKAEIIDAAHHRVEEINKAFRRGLMTDDDRYVAVTTTWREAKEALEKRLIETQNPKNPIVMMMDSGARGNISNFSQLAGMRGLMAAPNGRIMELPILSNFREGLSVLEMFFSTHGARKGMTDTALKTADSGYLTRRLVDVAQDVIIREDDCGTDRGLLIRAITDGKEVTETLEERLQGRYTRKSVKHPETGEVLIGADQLITEDMARKIVDAGVEEVTIRSVFTCATRHGVCRHCYGINLATGDAVEVGEAVGTIAAQSIGEPGTQLTMRTFHTGGVASNTDITQGLPRIQEIFEARNPKGEAVITEVKGNVVEIEEDASTRTKKVYVQGKTGMGEYVVPFTARMKVEVGDEVNRGAALTEGSIQPKRLLEVRDTLSVETYLLAEVQKVYRSQGVEIGDKHVEVMVRQMLRKVRVMDPGDTDLLPGTLMDISDFTDANKDIVISGGIPATSRPVLMGITKASLETNSFLSAASFQETTRVLTDAAIRGKKDHLLGLKENVIIGKIIPAGTGMARYRNIEPQAMNEIEVIDHTEVSAEAVFTAEAE.

Positions 60, 62, 75, and 78 each coordinate Zn(2+). 3 residues coordinate Mg(2+): D450, D452, and D454. C819, C893, C900, and C903 together coordinate Zn(2+).

This sequence belongs to the RNA polymerase beta' chain family. As to quaternary structure, the RNAP catalytic core consists of 2 alpha, 1 beta, 1 beta' and 1 omega subunit. When a sigma factor is associated with the core the holoenzyme is formed, which can initiate transcription. Requires Mg(2+) as cofactor. Zn(2+) serves as cofactor.

The enzyme catalyses RNA(n) + a ribonucleoside 5'-triphosphate = RNA(n+1) + diphosphate. In terms of biological role, DNA-dependent RNA polymerase catalyzes the transcription of DNA into RNA using the four ribonucleoside triphosphates as substrates. This chain is DNA-directed RNA polymerase subunit beta', found in Streptococcus pyogenes serotype M6 (strain ATCC BAA-946 / MGAS10394).